A 1475-amino-acid polypeptide reads, in one-letter code: Peroxidasin homolog (1475 aa).

The N-terminal stretch at Met-1 to Ala-23 is a signal peptide. Positions Val-24–Gln-60 constitute an LRRNT domain. 2 disulfide bridges follow: Cys-33/Cys-39 and Cys-37/Cys-46. LRR repeat units lie at residues Ala-58–Arg-81, Leu-82–Asp-105, Glu-107–Gly-129, Leu-130–His-153, Leu-154–Gln-177, and Glu-179–Ala-201. Positions Asn-189–Glu-241 constitute an LRRCT domain. Intrachain disulfides connect Cys-193–Cys-240, Cys-195–Cys-219, Cys-264–Cys-314, Cys-360–Cys-409, Cys-451–Cys-499, and Cys-543–Cys-591. 4 consecutive Ig-like C2-type domains span residues Pro-243–Thr-329, Pro-339–Ile-425, Pro-430–Gln-517, and Pro-518–Ser-607. N-linked (GlcNAc...) asparagine glycosylation is present at Asn-387. One copy of the LRR 7 repeat lies at Ser-402 to Ile-425. N-linked (GlcNAc...) asparagine glycosylation is found at Asn-637, Asn-696, Asn-716, and Asn-728. 4 disulfides stabilise this stretch: Cys-720/Cys-882, Cys-729/Cys-745, Cys-844/Cys-854, and Cys-848/Cys-872. Asp-823 lines the heme b pocket. The active-site Proton acceptor is the His-824. Ca(2+) is bound at residue Asp-825. Positions 904, 906, 908, and 910 each coordinate Ca(2+). Residues Cys-956 and Cys-967 are joined by a disulfide bond. A glycan (N-linked (GlcNAc...) asparagine) is linked at Asn-961. The heme b site is built by Glu-977 and His-1071. The LRR 8 repeat unit spans residues Ala-1148–Val-1172. Phosphotyrosine is present on Tyr-1173. 2 disulfides stabilise this stretch: Cys-1174-Cys-1231 and Cys-1272-Cys-1298. Asn-1175 carries an N-linked (GlcNAc...) asparagine glycan. Position 1177 is a phosphoserine (Ser-1177). The stretch at Leu-1267–Val-1288 is one LRR 9 repeat. 2 N-linked (GlcNAc...) asparagine glycosylation sites follow: Asn-1277 and Asn-1364. The segment at Cys-1312–Ser-1407 is required in homotrimerization. Residues Thr-1409–Leu-1467 form the VWFC domain.

The protein belongs to the peroxidase family. XPO subfamily. Homotrimer; disulfide-linked. The homotrimer form is predominant. Homooligomer; disulfide-linked. Oligomerization occurs intracellularly before C-terminal proteolytic cleavage. Interacts with PXDNL; this interaction inhibits the peroxidase activity of PXDN. It depends on Ca(2+) as a cofactor. Heme b is required as a cofactor. Processed by FURIN and the proteolytic processing largely depends on the peroxidase activity of PXDN. The proteolytic cleavage occurs after intracellular homotrimerization and releases into the extracellular matrix a large, catalytically active fragment and a smaller fragment consisting primarily of the C-terminal VWFC domain. The processing enhances both peroxidase activity and sulfilimine cross-links formation. As to expression, highly expressed in the cardiovascular system. In the embryo, expressed in the corneal epithelial layer. In the adult eyes, expressed in the corneal and lens epithelium. Expressed in lung.

Its subcellular location is the secreted. It localises to the extracellular space. The protein resides in the extracellular matrix. It is found in the endoplasmic reticulum. The protein localises to the cell surface. Its subcellular location is the basement membrane. It catalyses the reaction L-lysyl-[collagen] + L-methionyl-[collagen] + H2O2 = [collagen]-L-lysyl-N-S-L-methionyl-[collagen] + 2 H2O + H(+). It carries out the reaction bromide + H2O2 = hypobromite + H2O. The catalysed reaction is L-lysyl-[collagen] + L-methionyl-[collagen] + hypobromite = [collagen]-L-lysyl-N-S-L-methionyl-[collagen] + bromide + H2O + H(+). The enzyme catalyses (5R)-5-hydroxy-L-lysyl-[collagen] + L-methionyl-[collagen] + hypobromite = [collagen]-(5R)-5-hydroxy-L-lysyl-N-S-L-methionyl-[collagen] + bromide + H2O + H(+). It catalyses the reaction (5R)-5-hydroxy-L-lysyl-[collagen] + L-methionyl-[collagen] + H2O2 = [collagen]-(5R)-5-hydroxy-L-lysyl-N-S-L-methionyl-[collagen] + 2 H2O + H(+). It carries out the reaction L-tyrosyl-[protein] + bromide + H2O2 + H(+) = 3-bromo-L-tyrosyl-[protein] + 2 H2O. The catalysed reaction is hypobromite + L-tyrosyl-[protein] + H(+) = 3-bromo-L-tyrosyl-[protein] + H2O. With respect to regulation, thiocyanate inhibits the formation of 3-bromotyrosine. In terms of biological role, catalyzes the two-electron oxidation of bromide by hydrogen peroxide and generates hypobromite as a reactive intermediate which mediates the formation of sulfilimine cross-links between methionine and hydroxylysine residues within an uncross-linked collagen IV/COL4A1 NC1 hexamer. In turns, directly contributes to the collagen IV network-dependent fibronectin/FN and laminin assembly, which is required for full extracellular matrix (ECM)-mediated signaling. Thus, sulfilimine cross-links are essential for growth factor-induced cell proliferation and survival in endothelial cells, an event essential to basement membrane integrity. In addition, through the bromide oxidation, may promote tubulogenesis and induce angiogenesis through ERK1/2, Akt, and FAK pathways. Moreover brominates alpha2 collagen IV chain/COL4A2 at 'Tyr-1480' and leads to bromine enrichment of the basement membranes. In vitro, can also catalyze the two-electron oxidation of thiocyanate and iodide and these two substrates could effectively compete with bromide and thus inhibit the formation of sulfilimine bonds. Binds laminins. May play a role in the organization of eyeball structure and lens development during eye development. This Mus musculus (Mouse) protein is Peroxidasin homolog.